The chain runs to 286 residues: Bifunctional protein FolD (286 aa).

Residues 165–167 (GRS) and Ser-190 contribute to the NADP(+) site.

The protein belongs to the tetrahydrofolate dehydrogenase/cyclohydrolase family. In terms of assembly, homodimer.

The catalysed reaction is (6R)-5,10-methylene-5,6,7,8-tetrahydrofolate + NADP(+) = (6R)-5,10-methenyltetrahydrofolate + NADPH. The enzyme catalyses (6R)-5,10-methenyltetrahydrofolate + H2O = (6R)-10-formyltetrahydrofolate + H(+). Its pathway is one-carbon metabolism; tetrahydrofolate interconversion. Catalyzes the oxidation of 5,10-methylenetetrahydrofolate to 5,10-methenyltetrahydrofolate and then the hydrolysis of 5,10-methenyltetrahydrofolate to 10-formyltetrahydrofolate. The protein is Bifunctional protein FolD of Staphylococcus aureus (strain USA300).